The chain runs to 474 residues: L-arabinose isomerase (474 aa).

Mn(2+) contacts are provided by E306, E331, H348, and H447.

The protein belongs to the arabinose isomerase family. It depends on Mn(2+) as a cofactor.

The enzyme catalyses beta-L-arabinopyranose = L-ribulose. It participates in carbohydrate degradation; L-arabinose degradation via L-ribulose; D-xylulose 5-phosphate from L-arabinose (bacterial route): step 1/3. Functionally, catalyzes the conversion of L-arabinose to L-ribulose. This is L-arabinose isomerase from Pediococcus pentosaceus (strain ATCC 25745 / CCUG 21536 / LMG 10740 / 183-1w).